The chain runs to 148 residues: NADPH-dependent 7-cyano-7-deazaguanine reductase (148 aa).

Catalysis depends on cysteine 50, which acts as the Thioimide intermediate. Aspartate 57 acts as the Proton donor in catalysis. Residues 72–74 and 91–92 each bind substrate; these read VES and HE.

It belongs to the GTP cyclohydrolase I family. QueF type 1 subfamily.

Its subcellular location is the cytoplasm. It catalyses the reaction 7-aminomethyl-7-carbaguanine + 2 NADP(+) = 7-cyano-7-deazaguanine + 2 NADPH + 3 H(+). Its pathway is tRNA modification; tRNA-queuosine biosynthesis. In terms of biological role, catalyzes the NADPH-dependent reduction of 7-cyano-7-deazaguanine (preQ0) to 7-aminomethyl-7-deazaguanine (preQ1). The polypeptide is NADPH-dependent 7-cyano-7-deazaguanine reductase (Helicobacter pylori (strain J99 / ATCC 700824) (Campylobacter pylori J99)).